Consider the following 360-residue polypeptide: Protein Wnt-2 (360 aa).

The signal sequence occupies residues 1–26; it reads MNAPLGGIWLWLPLLLTWLTPEVSSS. 11 disulfide bridges follow: Cys-76-Cys-87, Cys-127-Cys-135, Cys-137-Cys-157, Cys-206-Cys-220, Cys-208-Cys-215, Cys-278-Cys-309, Cys-294-Cys-304, Cys-308-Cys-348, Cys-324-Cys-339, Cys-326-Cys-336, and Cys-331-Cys-332. A lipid anchor (O-palmitoleoyl serine; by PORCN) is attached at Ser-212. Asn-295 carries N-linked (GlcNAc...) asparagine glycosylation.

This sequence belongs to the Wnt family. Palmitoleoylation is required for efficient binding to frizzled receptors. Depalmitoleoylation leads to Wnt signaling pathway inhibition.

Its subcellular location is the secreted. The protein resides in the extracellular space. The protein localises to the extracellular matrix. Functionally, ligand for members of the frizzled family of seven transmembrane receptors. Probable developmental protein. May be a signaling molecule which affects the development of discrete regions of tissues. Is likely to signal over only few cell diameters. The sequence is that of Protein Wnt-2 (WNT2) from Eulemur macaco macaco (Black lemur).